A 344-amino-acid chain; its full sequence is Dihydroorotase (344 aa).

Zn(2+) contacts are provided by His13 and His15. Residues 15–17 and Asn41 each bind substrate; that span reads HLR. 3 residues coordinate Zn(2+): Lys99, His136, and His174. Lys99 carries the post-translational modification N6-carboxylysine. His136 serves as a coordination point for substrate. Residue Leu219 coordinates substrate. Residue Asp247 participates in Zn(2+) binding. Residue Asp247 is part of the active site. 2 residues coordinate substrate: His251 and Ala263.

The protein belongs to the metallo-dependent hydrolases superfamily. DHOase family. Class II DHOase subfamily. Homodimer. Zn(2+) is required as a cofactor.

The catalysed reaction is (S)-dihydroorotate + H2O = N-carbamoyl-L-aspartate + H(+). The protein operates within pyrimidine metabolism; UMP biosynthesis via de novo pathway; (S)-dihydroorotate from bicarbonate: step 3/3. In terms of biological role, catalyzes the reversible cyclization of carbamoyl aspartate to dihydroorotate. The protein is Dihydroorotase of Acinetobacter baumannii (strain AB307-0294).